A 238-amino-acid polypeptide reads, in one-letter code: Cadherin-2 (238 aa).

3 Cadherin domains span residues 1–46 (TKPL…RPEF), 47–161 (LHQV…PPEF), and 162–238 (TAMT…RMFV). Residues 1–238 (TKPLDRELIA…IDFETNRMFV (238 aa)) lie on the Extracellular side of the membrane. Residues Asp5, Glu7, Asp38, Met39, Asn40, Asp41, and Asn42 each coordinate Ca(2+). N-linked (GlcNAc...) asparagine glycosylation occurs at Asn52. Ca(2+) is bound by residues Asp72, Asp74, and Asn80. N-linked (GlcNAc...) asparagine glycosylation occurs at Asn104. Asp132 serves as a coordination point for Ca(2+). A glycan (N-linked (GlcNAc...) asparagine) is linked at Asn181.

As to quaternary structure, homodimer (via extracellular region). Can also form heterodimers with other cadherins (via extracellular region). Dimerization occurs in trans, i.e. with a cadherin chain from another cell. Interacts with CDCP1. Interacts with PCDH8; this complex may also include TAOK2. The interaction with PCDH8 may lead to internalization through TAOK2/p38 MAPK pathway. Identified in a complex containing FGFR4, NCAM1, CDH2, PLCG1, FRS2, SRC, SHC1, GAP43 and CTTN. May interact with OBSCN (via protein kinase domain 2). In terms of processing, cleaved by MMP24. Ectodomain cleavage leads to the generation of a soluble 90 kDa N-terminal soluble fragment and a 45 kDa membrane-bound C-terminal fragment 1 (CTF1), which is further cleaved by gamma-secretase into a 35 kDa. Cleavage in neural stem cells by MMP24 affects CDH2-mediated anchorage of neural stem cells to ependymocytes in the adult subependymal zone, leading to modulate neural stem cell quiescence. Post-translationally, may be phosphorylated by OBSCN.

The protein resides in the cell membrane. The protein localises to the sarcolemma. It is found in the cell junction. It localises to the cell surface. Its subcellular location is the desmosome. The protein resides in the adherens junction. Its function is as follows. Calcium-dependent cell adhesion protein; preferentially mediates homotypic cell-cell adhesion by dimerization with a CDH2 chain from another cell. Cadherins may thus contribute to the sorting of heterogeneous cell types. Acts as a regulator of neural stem cells quiescence by mediating anchorage of neural stem cells to ependymocytes in the adult subependymal zone: upon cleavage by MMP24, CDH2-mediated anchorage is affected, leading to modulate neural stem cell quiescence. Plays a role in cell-to-cell junction formation between pancreatic beta cells and neural crest stem (NCS) cells, promoting the formation of processes by NCS cells. Required for proper neurite branching. Required for pre- and postsynaptic organization. CDH2 may be involved in neuronal recognition mechanism. In hippocampal neurons, may regulate dendritic spine density. In Cricetulus griseus (Chinese hamster), this protein is Cadherin-2 (CDH2).